A 546-amino-acid chain; its full sequence is SusD-like protein BACOVA_02651 (546 aa).

Residues 1-21 form the signal peptide; that stretch reads MRIFMKSKLLVIATTALLFAA. Cys22 carries the N-palmitoyl cysteine lipid modification. Cys22 carries S-diacylglycerol cysteine lipidation.

The protein belongs to the SusD family.

The protein resides in the cell outer membrane. The protein operates within glucan metabolism; xyloglucan degradation. In terms of biological role, polysaccharide-binding protein present at the surface of the cell. Probably mediates xyloglucan-binding before xyloglucan transport in the periplasm for degradation. This Bacteroides ovatus (strain ATCC 8483 / DSM 1896 / JCM 5824 / BCRC 10623 / CCUG 4943 / NCTC 11153) protein is SusD-like protein BACOVA_02651.